The sequence spans 275 residues: Polyamine aminopropyltransferase (275 aa).

A PABS domain is found at 2–235 (DLWLREGQIE…GFWSFTIGSK (234 aa)). Q31 is an S-methyl-5'-thioadenosine binding site. Positions 62 and 86 each coordinate spermidine. S-methyl-5'-thioadenosine-binding positions include E106 and 137–138 (DG). D155 functions as the Proton acceptor in the catalytic mechanism. Residue 155 to 158 (DSTD) coordinates spermidine.

It belongs to the spermidine/spermine synthase family. As to quaternary structure, homodimer or homotetramer.

The protein resides in the cytoplasm. The enzyme catalyses S-adenosyl 3-(methylsulfanyl)propylamine + putrescine = S-methyl-5'-thioadenosine + spermidine + H(+). It functions in the pathway amine and polyamine biosynthesis; spermidine biosynthesis; spermidine from putrescine: step 1/1. Catalyzes the irreversible transfer of a propylamine group from the amino donor S-adenosylmethioninamine (decarboxy-AdoMet) to putrescine (1,4-diaminobutane) to yield spermidine. In Clostridium kluyveri (strain NBRC 12016), this protein is Polyamine aminopropyltransferase.